The following is a 106-amino-acid chain: Large ribosomal subunit protein uL24 (106 aa).

Belongs to the universal ribosomal protein uL24 family. Part of the 50S ribosomal subunit.

One of two assembly initiator proteins, it binds directly to the 5'-end of the 23S rRNA, where it nucleates assembly of the 50S subunit. In terms of biological role, one of the proteins that surrounds the polypeptide exit tunnel on the outside of the subunit. The sequence is that of Large ribosomal subunit protein uL24 from Blochmanniella floridana.